The chain runs to 68 residues: Tetrahydromethanopterin S-methyltransferase subunit F (68 aa).

The helical transmembrane segment at Ile45–Leu65 threads the bilayer.

Belongs to the MtrF family. The complex is composed of 8 subunits; MtrA, MtrB, MtrC, MtrD, MtrE, MtrF, MtrG and MtrH.

It is found in the cell membrane. The catalysed reaction is 5-methyl-5,6,7,8-tetrahydromethanopterin + coenzyme M + 2 Na(+)(in) = 5,6,7,8-tetrahydromethanopterin + methyl-coenzyme M + 2 Na(+)(out). Its pathway is one-carbon metabolism; methanogenesis from CO(2); methyl-coenzyme M from 5,10-methylene-5,6,7,8-tetrahydromethanopterin: step 2/2. In terms of biological role, part of a complex that catalyzes the formation of methyl-coenzyme M and tetrahydromethanopterin from coenzyme M and methyl-tetrahydromethanopterin. This is an energy-conserving, sodium-ion translocating step. This Methanothermobacter marburgensis (strain ATCC BAA-927 / DSM 2133 / JCM 14651 / NBRC 100331 / OCM 82 / Marburg) (Methanobacterium thermoautotrophicum) protein is Tetrahydromethanopterin S-methyltransferase subunit F (mtrF).